The chain runs to 440 residues: Xylose isomerase (440 aa).

Active-site residues include histidine 101 and aspartate 104. The Mg(2+) site is built by glutamate 232, glutamate 268, histidine 271, aspartate 296, aspartate 307, aspartate 309, and aspartate 339.

The protein belongs to the xylose isomerase family. Homotetramer. It depends on Mg(2+) as a cofactor.

It localises to the cytoplasm. The catalysed reaction is alpha-D-xylose = alpha-D-xylulofuranose. The protein is Xylose isomerase of Escherichia coli O17:K52:H18 (strain UMN026 / ExPEC).